Reading from the N-terminus, the 880-residue chain is Alanine--tRNA ligase (880 aa).

The Zn(2+) site is built by His567, His571, Cys669, and His673.

Belongs to the class-II aminoacyl-tRNA synthetase family. Zn(2+) serves as cofactor.

The protein resides in the cytoplasm. The enzyme catalyses tRNA(Ala) + L-alanine + ATP = L-alanyl-tRNA(Ala) + AMP + diphosphate. Functionally, catalyzes the attachment of alanine to tRNA(Ala) in a two-step reaction: alanine is first activated by ATP to form Ala-AMP and then transferred to the acceptor end of tRNA(Ala). Also edits incorrectly charged Ser-tRNA(Ala) and Gly-tRNA(Ala) via its editing domain. The polypeptide is Alanine--tRNA ligase (Bacillus mycoides (strain KBAB4) (Bacillus weihenstephanensis)).